A 487-amino-acid polypeptide reads, in one-letter code: 2-succinylbenzoate--CoA ligase (487 aa).

It belongs to the ATP-dependent AMP-binding enzyme family. MenE subfamily.

It carries out the reaction 2-succinylbenzoate + ATP + CoA = 2-succinylbenzoyl-CoA + AMP + diphosphate. It functions in the pathway quinol/quinone metabolism; 1,4-dihydroxy-2-naphthoate biosynthesis; 1,4-dihydroxy-2-naphthoate from chorismate: step 5/7. Its pathway is quinol/quinone metabolism; menaquinone biosynthesis. Functionally, converts 2-succinylbenzoate (OSB) to 2-succinylbenzoyl-CoA (OSB-CoA). This Bacillus velezensis (strain DSM 23117 / BGSC 10A6 / LMG 26770 / FZB42) (Bacillus amyloliquefaciens subsp. plantarum) protein is 2-succinylbenzoate--CoA ligase.